A 427-amino-acid chain; its full sequence is Acyl-lipid 8-desaturase (427 aa).

A disordered region spans residues 1 to 24 (MGRGGDSSGQAHPAAELAVPSDRA). Residues 36–84 (IVLYGKRVDVTKFQRTHPGGSKVFRIFQDRDATEQFESYHSKRAIKMME) form the Cytochrome b5 heme-binding domain. Heme-binding residues include H52 and H75. The Histidine box-1 signature appears at 178-182 (HSVFK). A helical transmembrane segment spans residues 189 to 209 (VGWNNAAGYFLGFVQGYAVEW). Residues 213–218 (RHNTHH) carry the Histidine box-2 motif. 2 helical membrane-spanning segments follow: residues 261–281 (VPVMAILDLYWRLESIAYVAM) and 286–306 (MLPQALALVAHYAIVAWVFAG). The Histidine box-3 motif lies at 373–377 (QTEHH).

This sequence belongs to the fatty acid desaturase type 1 family. Fe(2+) serves as cofactor.

The protein resides in the membrane. Fatty acid desaturase that introduces a cis double bond at the 8-position in 20-carbon polyunsaturated fatty acids incorporated in a glycerolipid that contain a Delta(8) double bond to yield (20:4(8,11,14,17)). The chain is Acyl-lipid 8-desaturase from Rebecca salina (Marine microalga).